The primary structure comprises 370 residues: Pantothenate kinase 3 (370 aa).

The active-site Proton acceptor is the Glu138. Acetyl-CoA contacts are provided by Ser192, Ser195, and Arg207.

The protein belongs to the type II pantothenate kinase family. Homodimer. Highly expressed in the liver.

Its subcellular location is the cytoplasm. The enzyme catalyses (R)-pantothenate + ATP = (R)-4'-phosphopantothenate + ADP + H(+). It functions in the pathway cofactor biosynthesis; coenzyme A biosynthesis; CoA from (R)-pantothenate: step 1/5. Subject to allosteric regulation, exists in two distinct conformational states, a catalytically incompetent (or open) conformation stabilized by the binding of acetyl(acyl)-CoA, and a catalytically competent (or closed) conformation stabilized by ATP-binding. Acetyl-CoA and its thioesters act as allosteric inhibitors and compete with the ATP-binding site. Strongly inhibited by acetyl-CoA, malonyl-CoA and palmitoyl CoA and modestly inhibited by CoA. Inhibited by calcium hopantenate. Functionally, catalyzes the phosphorylation of pantothenate to generate 4'-phosphopantothenate in the first and rate-determining step of coenzyme A (CoA) synthesis. This chain is Pantothenate kinase 3 (Pank3), found in Mus musculus (Mouse).